The following is a 259-amino-acid chain: Putative protein-tyrosine sulfotransferase (259 aa).

A disulfide bond links Cys13 and Cys68. The active-site Proton donor/acceptor is the Glu16. N-linked (GlcNAc...) asparagine glycosylation is present at Asn36. 3'-phosphoadenylyl sulfate-binding residues include Arg95, Ser103, and Arg107. Asn115 is a glycosylation site (N-linked (GlcNAc...) asparagine). An intrachain disulfide couples Cys137 to Cys144. 3'-phosphoadenylyl sulfate is bound by residues Tyr149 and 194–203 (SASQVKNSIN).

It belongs to the protein sulfotransferase family.

It catalyses the reaction L-tyrosyl-[protein] + 3'-phosphoadenylyl sulfate = O-sulfo-L-tyrosine-[protein] + adenosine 3',5'-bisphosphate + H(+). Functionally, catalyzes the O-sulfation of tyrosine residues within acidic motifs of polypeptides, using 3'-phosphoadenylyl sulfate (PAPS) as cosubstrate. This is Putative protein-tyrosine sulfotransferase (tpst-2) from Caenorhabditis elegans.